A 288-amino-acid chain; its full sequence is Serine/threonine-protein acetyltransferase YopJ (288 aa).

Catalysis depends on residues H109 and E128. Residue H109 participates in CoA binding. Position 167 to 168 (R167 to S168) interacts with CoA. C172 is a catalytic residue. 1D-myo-inositol hexakisphosphate contacts are provided by residues K182 to I185 and K224 to H225. Q227–K230 is a CoA binding site. A 1D-myo-inositol hexakisphosphate-binding site is contributed by R257. Residue D266–L270 coordinates CoA.

It belongs to the acetyltransferase YopJ family. 1D-myo-inositol hexakisphosphate serves as cofactor.

It localises to the secreted. It carries out the reaction L-threonyl-[protein] + acetyl-CoA = O-acetyl-L-threonyl-[protein] + CoA. The enzyme catalyses L-seryl-[protein] + acetyl-CoA = O-acetyl-L-seryl-[protein] + CoA. 1D-myo-inositol hexakisphosphate activates protein-acetyltransferase activity via an allosteric mechanism: 1D-myo-inositol hexakisphosphate-binding induces a conformational rearrangement that stimulates the interaction with acetyl-CoA. In terms of biological role, serine/threonine-protein acetyltransferase translocated into infected cells, which inhibits the host immune response and induces cell death by mediating acetylation of target proteins. Inhibits the MAPK and NF-kappa-B signaling pathways by acetylating protein-kinases such as MAP2K1, MAP2K6, MAP3K7/TAK1 and I-kappa-B kinase (CHUK/IKKA and IKBKB) on serine and threonine residues critical for their activation by phosphorylation, thereby preventing protein-kinase activation. Promotes pyroptosis, a programmed cell death, in host cells by mediating acetylation of MAP3K7/TAK1: MAP3K7/TAK1 inactivation triggers activation of caspase-8 (CASP8), followed by CASP8-dependent cleavage of gasdermin-D (GSDMD) and induction of pyroptosis. Also able to induce intestinal barrier dysfunction by acetylating and inhibiting host protein-kinases RIPK2/RICK and MAP3K7/TAK1, thereby promoting cell death. The protein is Serine/threonine-protein acetyltransferase YopJ of Yersinia pseudotuberculosis serotype I (strain IP32953).